A 48-amino-acid chain; its full sequence is Large ribosomal subunit protein bL33A (48 aa).

It belongs to the bacterial ribosomal protein bL33 family.

The sequence is that of Large ribosomal subunit protein bL33A from Exiguobacterium sibiricum (strain DSM 17290 / CCUG 55495 / CIP 109462 / JCM 13490 / 255-15).